The sequence spans 345 residues: AP2-like ethylene-responsive transcription factor At1g16060 (345 aa).

The interval T15–V62 is disordered. 2 DNA-binding regions (AP2/ERF) span residues V58–P124 and K160–D218. The interval H243–F302 is disordered.

Belongs to the AP2/ERF transcription factor family. AP2 subfamily.

The protein localises to the nucleus. Functionally, probably acts as a transcriptional activator. Binds to the GCC-box pathogenesis-related promoter element. May be involved in the regulation of gene expression by stress factors and by components of stress signal transduction pathways. The sequence is that of AP2-like ethylene-responsive transcription factor At1g16060 from Arabidopsis thaliana (Mouse-ear cress).